The chain runs to 365 residues: Carbamoyl phosphate synthase small chain (365 aa).

2 CPSase regions span residues methionine 1–glycine 166 and methionine 1–histidine 169. Serine 45, glycine 218, and glycine 220 together coordinate L-glutamine. The Glutamine amidotransferase type-1 domain occupies arginine 170–glutamate 357. The active-site Nucleophile is the cysteine 245. The L-glutamine site is built by leucine 246, glutamine 249, asparagine 287, glycine 289, and tyrosine 290. Catalysis depends on residues histidine 330 and glutamate 332.

It belongs to the CarA family. In terms of assembly, composed of two chains; the small (or glutamine) chain promotes the hydrolysis of glutamine to ammonia, which is used by the large (or ammonia) chain to synthesize carbamoyl phosphate. Tetramer of heterodimers (alpha,beta)4.

It carries out the reaction hydrogencarbonate + L-glutamine + 2 ATP + H2O = carbamoyl phosphate + L-glutamate + 2 ADP + phosphate + 2 H(+). The enzyme catalyses L-glutamine + H2O = L-glutamate + NH4(+). Its pathway is amino-acid biosynthesis; L-arginine biosynthesis; carbamoyl phosphate from bicarbonate: step 1/1. The protein operates within pyrimidine metabolism; UMP biosynthesis via de novo pathway; (S)-dihydroorotate from bicarbonate: step 1/3. Small subunit of the glutamine-dependent carbamoyl phosphate synthetase (CPSase). CPSase catalyzes the formation of carbamoyl phosphate from the ammonia moiety of glutamine, carbonate, and phosphate donated by ATP, constituting the first step of 2 biosynthetic pathways, one leading to arginine and/or urea and the other to pyrimidine nucleotides. The small subunit (glutamine amidotransferase) binds and cleaves glutamine to supply the large subunit with the substrate ammonia. The polypeptide is Carbamoyl phosphate synthase small chain (Bacillus cereus (strain ATCC 14579 / DSM 31 / CCUG 7414 / JCM 2152 / NBRC 15305 / NCIMB 9373 / NCTC 2599 / NRRL B-3711)).